Consider the following 359-residue polypeptide: Probable deacetylase AF_0130 (359 aa).

The active-site Proton donor/acceptor is the H126. Zn(2+) is bound by residues D162, H164, and D249.

Belongs to the histone deacetylase family. It depends on Zn(2+) as a cofactor.

Functionally, probable deacetylase. The chain is Probable deacetylase AF_0130 from Archaeoglobus fulgidus (strain ATCC 49558 / DSM 4304 / JCM 9628 / NBRC 100126 / VC-16).